Reading from the N-terminus, the 359-residue chain is Phospho-N-acetylmuramoyl-pentapeptide-transferase (359 aa).

10 helical membrane-spanning segments follow: residues 27-47 (IGAA…FIRT), 71-91 (VPTM…LLWA), 93-113 (LDNP…MIGA), 134-154 (LLLQ…HPGY), 170-190 (LGWF…NAVN), 203-223 (MVVS…VVLA), 234-254 (SGEL…FLWF), 262-282 (FMGD…AIII), 286-306 (FLLA…MLQV), and 336-356 (KVVV…IATL).

The protein belongs to the glycosyltransferase 4 family. MraY subfamily. Mg(2+) is required as a cofactor.

The protein resides in the cell inner membrane. It carries out the reaction UDP-N-acetyl-alpha-D-muramoyl-L-alanyl-gamma-D-glutamyl-meso-2,6-diaminopimeloyl-D-alanyl-D-alanine + di-trans,octa-cis-undecaprenyl phosphate = di-trans,octa-cis-undecaprenyl diphospho-N-acetyl-alpha-D-muramoyl-L-alanyl-D-glutamyl-meso-2,6-diaminopimeloyl-D-alanyl-D-alanine + UMP. The protein operates within cell wall biogenesis; peptidoglycan biosynthesis. In terms of biological role, catalyzes the initial step of the lipid cycle reactions in the biosynthesis of the cell wall peptidoglycan: transfers peptidoglycan precursor phospho-MurNAc-pentapeptide from UDP-MurNAc-pentapeptide onto the lipid carrier undecaprenyl phosphate, yielding undecaprenyl-pyrophosphoryl-MurNAc-pentapeptide, known as lipid I. This chain is Phospho-N-acetylmuramoyl-pentapeptide-transferase, found in Desulfotalea psychrophila (strain LSv54 / DSM 12343).